A 447-amino-acid polypeptide reads, in one-letter code: Ribulose bisphosphate carboxylase large chain (447 aa).

Substrate is bound by residues Asn89 and Thr139. Catalysis depends on Lys141, which acts as the Proton acceptor. Lys143 contacts substrate. Positions 167, 169, and 170 each coordinate Mg(2+). Lys167 is subject to N6-carboxylysine. His260 serves as the catalytic Proton acceptor. Substrate-binding residues include Arg261, His293, and Ser345.

This sequence belongs to the RuBisCO large chain family. Type I subfamily. Heterohexadecamer of 8 large chains and 8 small chains; disulfide-linked. The disulfide link is formed within the large subunit homodimers. Mg(2+) serves as cofactor. In terms of processing, the disulfide bond which can form in the large chain dimeric partners within the hexadecamer appears to be associated with oxidative stress and protein turnover.

It is found in the plastid. Its subcellular location is the chloroplast. The catalysed reaction is 2 (2R)-3-phosphoglycerate + 2 H(+) = D-ribulose 1,5-bisphosphate + CO2 + H2O. It carries out the reaction D-ribulose 1,5-bisphosphate + O2 = 2-phosphoglycolate + (2R)-3-phosphoglycerate + 2 H(+). Its function is as follows. RuBisCO catalyzes two reactions: the carboxylation of D-ribulose 1,5-bisphosphate, the primary event in carbon dioxide fixation, as well as the oxidative fragmentation of the pentose substrate in the photorespiration process. Both reactions occur simultaneously and in competition at the same active site. The protein is Ribulose bisphosphate carboxylase large chain of Ligustrum vulgare (Common privet).